A 580-amino-acid chain; its full sequence is Arginine--tRNA ligase (580 aa).

The 'HIGH' region motif lies at Pro123–His133.

It belongs to the class-I aminoacyl-tRNA synthetase family. In terms of assembly, monomer.

The protein localises to the cytoplasm. It catalyses the reaction tRNA(Arg) + L-arginine + ATP = L-arginyl-tRNA(Arg) + AMP + diphosphate. This is Arginine--tRNA ligase from Pseudoalteromonas translucida (strain TAC 125).